The chain runs to 261 residues: Chanoclavine-I dehydrogenase easD (261 aa).

Ile18, Lys48, Asp66, Arg132, Tyr166, Lys170, and Thr201 together coordinate NADP(+). Tyr166 serves as the catalytic Proton donor. Lys170 (lowers pKa of active site Tyr) is an active-site residue.

Belongs to the short-chain dehydrogenases/reductases (SDR) family.

It carries out the reaction chanoclavine-I + NAD(+) = chanoclavine-I aldehyde + NADH + H(+). It participates in alkaloid biosynthesis; ergot alkaloid biosynthesis. Chanoclavine-I dehydrogenase; part of the gene cluster that mediates the biosynthesis of fumiclavanine C, a fungal ergot alkaloid. DmaW catalyzes the first step of ergot alkaloid biosynthesis by condensing dimethylallyl diphosphate (DMAP) and tryptophan to form 4-dimethylallyl-L-tryptophan. The second step is catalyzed by the methyltransferase easF that methylates 4-dimethylallyl-L-tryptophan in the presence of S-adenosyl-L-methionine, resulting in the formation of 4-dimethylallyl-L-abrine. The catalase easC and the FAD-dependent oxidoreductase easE then transform 4-dimethylallyl-L-abrine to chanoclavine-I which is further oxidized by EasD in the presence of NAD(+), resulting in the formation of chanoclavine-I aldehyde. EasA reduces chanoclavine-I aldehyde to dihydrochanoclavine-I aldehyde that spontaneously dehydrates to form 6,8-dimethyl-6,7-didehydroergoline. EasG then catalyzes the reduction of 6,8-dimethyl-6,7-didehydroergoline to form festuclavine. Hydrolysis of festuclavine by easM then leads to the formation of fumigaclavine B which is in turn acetylated by easN to fumigaclavine A. Finally, easL catalyzes the conversion of fumigaclavine A into fumigaclavine C by attaching a dimethylallyl moiety to C-2 of the indole nucleus. This chain is Chanoclavine-I dehydrogenase easD, found in Aspergillus fumigatus (strain ATCC MYA-4609 / CBS 101355 / FGSC A1100 / Af293) (Neosartorya fumigata).